Consider the following 510-residue polypeptide: NAD(P)H-quinone oxidoreductase subunit 2 A, chloroplastic (510 aa).

14 helical membrane passes run 31–51 (FIFP…IDLT), 59–79 (WFYF…LFRW), 99–119 (IFQF…VEYI), 124–144 (MAIT…MFLC), 149–169 (LITI…LSGY), 184–204 (LLMG…LYGL), 229–249 (ISIA…LAPF), 261–281 (PTPV…ALAT), 295–315 (WHLL…LLAI), 323–343 (MLAY…IVGD), 354–374 (YMLF…LFGL), 395–415 (ALSL…AGFF), 418–438 (LYLF…IGLL), and 484–504 (MTVC…ILAI).

Belongs to the complex I subunit 2 family. NDH is composed of at least 16 different subunits, 5 of which are encoded in the nucleus.

It is found in the plastid. The protein resides in the chloroplast thylakoid membrane. It carries out the reaction a plastoquinone + NADH + (n+1) H(+)(in) = a plastoquinol + NAD(+) + n H(+)(out). The catalysed reaction is a plastoquinone + NADPH + (n+1) H(+)(in) = a plastoquinol + NADP(+) + n H(+)(out). In terms of biological role, NDH shuttles electrons from NAD(P)H:plastoquinone, via FMN and iron-sulfur (Fe-S) centers, to quinones in the photosynthetic chain and possibly in a chloroplast respiratory chain. The immediate electron acceptor for the enzyme in this species is believed to be plastoquinone. Couples the redox reaction to proton translocation, and thus conserves the redox energy in a proton gradient. This chain is NAD(P)H-quinone oxidoreductase subunit 2 A, chloroplastic, found in Saccharum hybrid (Sugarcane).